We begin with the raw amino-acid sequence, 248 residues long: Phosphoadenosine 5'-phosphosulfate reductase (248 aa).

Cysteine 239 functions as the Nucleophile; cysteine thiosulfonate intermediate in the catalytic mechanism.

Belongs to the PAPS reductase family. CysH subfamily.

It localises to the cytoplasm. The enzyme catalyses [thioredoxin]-disulfide + sulfite + adenosine 3',5'-bisphosphate + 2 H(+) = [thioredoxin]-dithiol + 3'-phosphoadenylyl sulfate. The protein operates within sulfur metabolism; hydrogen sulfide biosynthesis; sulfite from sulfate: step 3/3. In terms of biological role, catalyzes the formation of sulfite from phosphoadenosine 5'-phosphosulfate (PAPS) using thioredoxin as an electron donor. In Alteromonas mediterranea (strain DSM 17117 / CIP 110805 / LMG 28347 / Deep ecotype), this protein is Phosphoadenosine 5'-phosphosulfate reductase.